The following is a 1018-amino-acid chain: Serine/threonine-protein phosphatase BSL2 (1018 aa).

The segment at 1–75 (MDEDSSMVAD…AAAVVGQEQQ (75 aa)) is disordered. The segment covering 41 to 57 (SPPPEGGSVPTPPPSDP) has biased composition (pro residues). Residues 63-75 (QQQAAAVVGQEQQ) show a composition bias toward low complexity. Kelch repeat units lie at residues 149 to 195 (TSAG…VATA), 253 to 301 (YLMA…TASA), 306 to 356 (LLLL…VFVN), 362 to 409 (SGGA…DAAG), and 430 to 479 (LIFI…RLPG). Residues 569-590 (DRDCGAEATPSGKPTFSLIKPD) form a disordered region. The residue at position 627 (serine 627) is a Phosphoserine. Mn(2+) is bound by residues aspartate 720, histidine 722, aspartate 754, and asparagine 786. Catalysis depends on histidine 787, which acts as the Proton donor. Mn(2+) contacts are provided by histidine 839 and histidine 918. Serine 975 carries the phosphoserine modification. The span at 994 to 1011 (ANRPATPTRGRPQNSNDR) shows a compositional bias: polar residues. The interval 994 to 1018 (ANRPATPTRGRPQNSNDRGGSLAWM) is disordered.

Belongs to the PPP phosphatase family. BSU subfamily. As to quaternary structure, interacts with BSK8. It depends on Mn(2+) as a cofactor. In terms of tissue distribution, expressed throughout the plant, with a higher level in younger parts.

It localises to the cytoplasm. The protein resides in the cell membrane. The protein localises to the nucleus. The enzyme catalyses O-phospho-L-seryl-[protein] + H2O = L-seryl-[protein] + phosphate. It catalyses the reaction O-phospho-L-threonyl-[protein] + H2O = L-threonyl-[protein] + phosphate. Functionally, phosphatase involved in elongation process, probably by acting as a regulator of brassinolide signaling. The sequence is that of Serine/threonine-protein phosphatase BSL2 (BSL2) from Arabidopsis thaliana (Mouse-ear cress).